Here is a 304-residue protein sequence, read N- to C-terminus: DnaJ homolog subfamily C member 17 (304 aa).

The J domain maps to 11–76 (DLYALLGIEE…AARAAYDKVR (66 aa)). The span at 79 to 106 (KKQAAERTQKLDEKRKKVKLDLEARERQ) shows a compositional bias: basic and acidic residues. The interval 79-145 (KKQAAERTQK…SRQLEEQQRL (67 aa)) is disordered. At S112 the chain carries Phosphoserine. A compositionally biased stretch (basic and acidic residues) spans 118–145 (SRSTRTLEQEIERLREEGSRQLEEQQRL). The RRM domain maps to 178–249 (KCKKEDESKG…NPLKISWLEG (72 aa)). Residue K264 is modified to N6-methyllysine.

Its subcellular location is the cytoplasm. The protein resides in the nucleus. May negatively affect PAX8-induced thyroglobulin/TG transcription. The protein is DnaJ homolog subfamily C member 17 (DNAJC17) of Homo sapiens (Human).